The primary structure comprises 872 residues: Exoglucanase A (872 aa).

The signal sequence occupies residues Met1–Ala40. The interval Ala41–Glu477 is catalytic. Cystine bridges form between Cys140-Cys202 and Cys374-Cys428. Catalysis depends on Asp188, which acts as the Proton donor. The active-site Nucleophile is the Asp410. Fibronectin type-III domains are found at residues Val484–Gly569, Val579–Gly667, and Val677–Ala765. The CBM2 domain occupies Gln763–Gly872. Cys770 and Cys869 are oxidised to a cystine.

The protein belongs to the glycosyl hydrolase 6 (cellulase B) family.

It catalyses the reaction Hydrolysis of (1-&gt;4)-beta-D-glucosidic linkages in cellulose and cellotetraose, releasing cellobiose from the non-reducing ends of the chains.. Its function is as follows. This enzyme hydrolyzes 1,4-beta-D-glucosidic linkages of cellulose. Weak activity against carboxymethylcellulose, bacterial microcrystalline cellulose and barley beta-glucan. Also has weak endoglucanase activity. Hydrolyzes glucosidic bonds with inversion of anomeric configuration. The polypeptide is Exoglucanase A (cbhA) (Cellulomonas fimi (strain ATCC 484 / DSM 20113 / JCM 1341 / CCUG 24087 / LMG 16345 / NBRC 15513 / NCIMB 8980 / NCTC 7547 / NRS-133)).